We begin with the raw amino-acid sequence, 305 residues long: Glutaminase 2 (305 aa).

Residues Ser61, Asn113, Glu158, Asn165, Tyr189, Tyr241, and Val259 each coordinate substrate.

The protein belongs to the glutaminase family. Homotetramer.

The enzyme catalyses L-glutamine + H2O = L-glutamate + NH4(+). In Clostridium perfringens (strain 13 / Type A), this protein is Glutaminase 2.